A 292-amino-acid chain; its full sequence is tRNA (guanine-N(7)-)-methyltransferase (292 aa).

The interval 1–52 is disordered; that stretch reads MGKIEATSKEEKLRVQKEAEARRRAYRDLKKEARQMQKEVKFDTDDNSELPK. Residues Gly-106, 129–130, 166–167, and Cys-186 contribute to the S-adenosyl-L-methionine site; these read EI and NA. Asp-189 is an active-site residue. 264–266 is a binding site for S-adenosyl-L-methionine; the sequence is TEE.

The protein belongs to the class I-like SAM-binding methyltransferase superfamily. TrmB family. In terms of assembly, forms a complex with TRM82.

It localises to the nucleus. The enzyme catalyses guanosine(46) in tRNA + S-adenosyl-L-methionine = N(7)-methylguanosine(46) in tRNA + S-adenosyl-L-homocysteine. The protein operates within tRNA modification; N(7)-methylguanine-tRNA biosynthesis. In terms of biological role, catalyzes the formation of N(7)-methylguanine at position 46 (m7G46) in tRNA. The sequence is that of tRNA (guanine-N(7)-)-methyltransferase from Debaryomyces hansenii (strain ATCC 36239 / CBS 767 / BCRC 21394 / JCM 1990 / NBRC 0083 / IGC 2968) (Yeast).